The chain runs to 361 residues: Chitin synthase export chaperone (361 aa).

The next 7 helical transmembrane spans lie at 48–68, 86–106, 119–139, 150–170, 184–204, 218–238, and 250–270; these read IIFQ…ATIM, LFFY…SAII, IYAG…FVGF, LWFL…IPVA, TVGL…IYFI, WVIG…LLLV, and HYVD…MMVY.

The protein belongs to the CHS7 family. Interacts with CHS3.

The protein resides in the endoplasmic reticulum membrane. In terms of biological role, chaperone required for the export of the chitin synthase CHS3 from the endoplasmic reticulum. This chain is Chitin synthase export chaperone (CHS7), found in Cryptococcus neoformans var. neoformans serotype D (strain JEC21 / ATCC MYA-565) (Filobasidiella neoformans).